Reading from the N-terminus, the 157-residue chain is Crossover junction endodeoxyribonuclease RuvC (157 aa).

Residues Asp-7, Glu-67, and Asp-139 contribute to the active site. Residues Asp-7, Glu-67, and Asp-139 each contribute to the Mg(2+) site.

Belongs to the RuvC family. In terms of assembly, homodimer which binds Holliday junction (HJ) DNA. The HJ becomes 2-fold symmetrical on binding to RuvC with unstacked arms; it has a different conformation from HJ DNA in complex with RuvA. In the full resolvosome a probable DNA-RuvA(4)-RuvB(12)-RuvC(2) complex forms which resolves the HJ. Mg(2+) serves as cofactor.

Its subcellular location is the cytoplasm. It catalyses the reaction Endonucleolytic cleavage at a junction such as a reciprocal single-stranded crossover between two homologous DNA duplexes (Holliday junction).. Functionally, the RuvA-RuvB-RuvC complex processes Holliday junction (HJ) DNA during genetic recombination and DNA repair. Endonuclease that resolves HJ intermediates. Cleaves cruciform DNA by making single-stranded nicks across the HJ at symmetrical positions within the homologous arms, yielding a 5'-phosphate and a 3'-hydroxyl group; requires a central core of homology in the junction. The consensus cleavage sequence is 5'-(A/T)TT(C/G)-3'. Cleavage occurs on the 3'-side of the TT dinucleotide at the point of strand exchange. HJ branch migration catalyzed by RuvA-RuvB allows RuvC to scan DNA until it finds its consensus sequence, where it cleaves and resolves the cruciform DNA. This Prochlorococcus marinus (strain AS9601) protein is Crossover junction endodeoxyribonuclease RuvC.